A 132-amino-acid chain; its full sequence is ATP synthase epsilon chain (132 aa).

Over residues 88 to 102 (IDKERAEAARQRAQE) the composition is skewed to basic and acidic residues. The interval 88-112 (IDKERAEAARQRAQERLNSQSDDTD) is disordered.

The protein belongs to the ATPase epsilon chain family. As to quaternary structure, F-type ATPases have 2 components, CF(1) - the catalytic core - and CF(0) - the membrane proton channel. CF(1) has five subunits: alpha(3), beta(3), gamma(1), delta(1), epsilon(1). CF(0) has three main subunits: a, b and c. The F(1)F(0) complex interacts with SpoIIIJ and YqjG; YqgA is found in the same complex.

The protein localises to the cell membrane. In terms of biological role, produces ATP from ADP in the presence of a proton gradient across the membrane. This is ATP synthase epsilon chain (atpC) from Bacillus subtilis (strain 168).